Consider the following 583-residue polypeptide: CD166 antigen (583 aa).

Residues 1–27 (MASKGSPSCRLVFCLLISAAVLRPGLG) form the signal peptide. 2 Ig-like V-type domains span residues 28–120 (WYTV…TEDN) and 125–234 (PTLV…KTIY). Over 28–527 (WYTVNSAYGD…NREKVNDQAK (500 aa)) the chain is Extracellular. 2 cysteine pairs are disulfide-bonded: Cys-43–Cys-113 and Cys-157–Cys-220. 8 N-linked (GlcNAc...) asparagine glycosylation sites follow: Asn-95, Asn-167, Asn-265, Asn-306, Asn-361, Asn-457, Asn-480, and Asn-499. Ig-like C2-type domains follow at residues 245–328 (PTEQ…TTIT), 333–409 (DLSL…ESLT), and 416–501 (PQIK…LNVS). 3 disulfide bridges follow: Cys-270–Cys-313, Cys-354–Cys-392, and Cys-435–Cys-485. A helical transmembrane segment spans residues 528 to 549 (LIVGIVVGLLLAALVAGVVYWL). The Cytoplasmic portion of the chain corresponds to 550-583 (YMKKSKTASKHVNKDLGNMEENKKLEENNHKTEA). The disordered stretch occupies residues 562–583 (NKDLGNMEENKKLEENNHKTEA). Over residues 569-583 (EENKKLEENNHKTEA) the composition is skewed to basic and acidic residues.

Homodimer. Interacts (via extracellular domain) with CD6 (via extracellular domain). Homodimerization and interaction with CD6 involve the same region and cannot occur simultaneously. The affinity for CD6 is much higher than the affinity for self-association. Interacts (via glycosylated extracellular domain) with LGALS1 and LGALS3. Interaction with LGALS1 or LGALS3 inhibits interaction with CD6. Post-translationally, the N-terminus is blocked. In terms of processing, glycosylated. Strongest expression in the lung, then brain, liver, and kidney. Present in the somatosensory system, basal ganglia, cortex, olfactory system, and circumventricular organs.

The protein resides in the cell membrane. It localises to the cell projection. It is found in the axon. Its subcellular location is the dendrite. In terms of biological role, cell adhesion molecule that mediates both heterotypic cell-cell contacts via its interaction with CD6, as well as homotypic cell-cell contacts. Promotes T-cell activation and proliferation via its interactions with CD6. Contributes to the formation and maturation of the immunological synapse via its interactions with CD6. Mediates homotypic interactions with cells that express ALCAM. Mediates attachment of dendritic cells onto endothelial cells via homotypic interaction. Inhibits endothelial cell migration and promotes endothelial tube formation via homotypic interactions. Required for normal organization of the lymph vessel network. Required for normal hematopoietic stem cell engraftment in the bone marrow. Plays a role in hematopoiesis; required for normal numbers of hematopoietic stem cells in bone marrow. Promotes in vitro osteoblast proliferation and differentiation. Promotes neurite extension, axon growth and axon guidance; axons grow preferentially on surfaces that contain ALCAM. Mediates outgrowth and pathfinding for retinal ganglion cell axons. The protein is CD166 antigen (Alcam) of Rattus norvegicus (Rat).